We begin with the raw amino-acid sequence, 474 residues long: Alkylcitrate dehydratase phiI (474 aa).

The protein belongs to the PrpD family. As to quaternary structure, monomer.

It catalyses the reaction (4E,11E)-2-hydroxytrideca-4,11-dien-1,2,3-tricarboxylate + 2 H(+) = [4-(deca-1,8-diyl)-2,5-dioxo-2,5-dihydro-3-furanyl]acetate + 2 H2O. The protein operates within secondary metabolite biosynthesis. Its function is as follows. Alkylcitrate dehydratasee; part of the gene cluster that mediates the biosynthesis of the antihypercholesterolemic agents phomoidrides which are dimeric anhydrides. Within the pathway, the alkylcitrate synthase (ACS) tstiJ and the alkylcitrate dehydratase (ACDH) tstI produce the decarboxylated monomeric anhydrides by coupling the C12-fatty acyl product from phiA with oxalacetic acid. The pathway begins with the highly reducing polyketide synthase tstA that catalyzes the formation of a C12-fatty acyl-ACP, starting from one acetate and 5 malonate units. The hydrolase tstM is involved in the release of the C12-fatty acyl chain from phiA. The alkylcitrate synthase (ACS) tstJ and the alkylcitrate dehydratase (ACDH) tstI then give rise to decarboxylated monomeric anhydrides by coupling the C12-fatty acyl chain with oxalacetic acid. The cyclase tstC is responsible for the dimerization of the monomeric anhydrides which leads to the production of prephomoidride that contains the characteristic bicyclo[4.3.1]deca-1,6-diene system of phomoidrides. Iterative oxidation catalyzed by the alpha-ketoglutarate-dependent dioxygenase tstK produced then phomoidride A. Finally, the methyltransferase tstE converts phomoidride A to phomoidride B via an acetalization reaction. The phosphatidylethanolamine-binding protein tstB and tstN are not essential for dimerization and their functions have still to be determined. This Talaromyces stipitatus (strain ATCC 10500 / CBS 375.48 / QM 6759 / NRRL 1006) (Penicillium stipitatum) protein is Alkylcitrate dehydratase phiI.